A 920-amino-acid chain; its full sequence is Isoleucine--tRNA ligase (920 aa).

Positions 58 to 68 (PYANGHLHLGH) match the 'HIGH' region motif. Residue Glu569 participates in L-isoleucyl-5'-AMP binding. Residues 610–614 (KMSKS) carry the 'KMSKS' region motif. Lys613 provides a ligand contact to ATP. Cys895, Cys898, Cys910, and Cys913 together coordinate Zn(2+).

Belongs to the class-I aminoacyl-tRNA synthetase family. IleS type 1 subfamily. In terms of assembly, monomer. Zn(2+) serves as cofactor.

The protein localises to the cytoplasm. The enzyme catalyses tRNA(Ile) + L-isoleucine + ATP = L-isoleucyl-tRNA(Ile) + AMP + diphosphate. Functionally, catalyzes the attachment of isoleucine to tRNA(Ile). As IleRS can inadvertently accommodate and process structurally similar amino acids such as valine, to avoid such errors it has two additional distinct tRNA(Ile)-dependent editing activities. One activity is designated as 'pretransfer' editing and involves the hydrolysis of activated Val-AMP. The other activity is designated 'posttransfer' editing and involves deacylation of mischarged Val-tRNA(Ile). In Helicobacter pylori (strain ATCC 700392 / 26695) (Campylobacter pylori), this protein is Isoleucine--tRNA ligase.